The sequence spans 320 residues: Beta-ketoacyl-[acyl-carrier-protein] synthase III (320 aa).

Catalysis depends on residues Cys-113 and His-247. Residues 248 to 252 form an ACP-binding region; that stretch reads QANRR. Residue Asn-277 is part of the active site.

The protein belongs to the thiolase-like superfamily. FabH family. In terms of assembly, homodimer.

It localises to the cytoplasm. The catalysed reaction is malonyl-[ACP] + acetyl-CoA + H(+) = 3-oxobutanoyl-[ACP] + CO2 + CoA. It participates in lipid metabolism; fatty acid biosynthesis. Functionally, catalyzes the condensation reaction of fatty acid synthesis by the addition to an acyl acceptor of two carbons from malonyl-ACP. Catalyzes the first condensation reaction which initiates fatty acid synthesis and may therefore play a role in governing the total rate of fatty acid production. Possesses both acetoacetyl-ACP synthase and acetyl transacylase activities. Its substrate specificity determines the biosynthesis of branched-chain and/or straight-chain of fatty acids. The chain is Beta-ketoacyl-[acyl-carrier-protein] synthase III from Acidiphilium cryptum (strain JF-5).